The primary structure comprises 485 residues: WAS/WASL-interacting protein family member 3 (485 aa).

The segment covering 1 to 41 has biased composition (pro residues); the sequence is MPVPPPPPPPPPPPPPPPPPLGAPPPPPLGAPPPPPPPGPP. Residues 1–485 form a disordered region; that stretch reads MPVPPPPPPP…QLSLKALPVR (485 aa). 3 short sequence motifs (profilin-binding motif) span residues 3-8, 11-16, and 31-36; these read VPPPPP, PPPPPP, and APPPPP. One can recognise a WH2 domain in the interval 56–73; the sequence is GRSALLADIQQGTRLRKV. An Asymmetric dimethylarginine modification is found at Arg57. The RLRK motif lies at 69 to 72; sequence RLRK. Ser161 is subject to Phosphoserine. The segment covering 176 to 203 has biased composition (pro residues); that stretch reads PVPPRPSVPAPPPPTPPPPPPPPLPPAS. Phosphoserine is present on Ser211. Positions 212–246 are enriched in pro residues; the sequence is PPAPPTKVNPSVVPPPLPCAPPLPPPPPTPPPLPP. The segment covering 247–262 has biased composition (low complexity); sequence ASALSDKAVRPQLAPL. 2 stretches are compositionally biased toward pro residues: residues 263-278 and 296-312; these read HLPPIPPPLPLLPPCG and PPAPPPPPPPPPPPPLP. Ser392 is subject to Phosphoserine. Over residues 392–405 the composition is skewed to polar residues; sequence SPTTELSSKSQQPG. Basic and acidic residues predominate over residues 415–439; sequence AIDDFESKFTFHSMEDFPPPDEYKP. Positions 424–448 match the WASP-binding motif motif; it reads TFHSMEDFPPPDEYKPCQKIYPSKV.

In terms of assembly, interacts with WASL, and monomeric and filamentous actin. As to expression, isoform 1 is expressed in brain and testis and isoform 2 is expressed only in brain (at protein level).

It is found in the cytoplasm. Its function is as follows. May be a regulator of cytoskeletal organization (Potential). May have a role in spermatogenesis. The sequence is that of WAS/WASL-interacting protein family member 3 (Wipf3) from Mus musculus (Mouse).